We begin with the raw amino-acid sequence, 770 residues long: MTLAKIELLKQLLRDNEAKTVLKQTTVDQYNIIRKFNTSRIEKNPSLRMKWAMCSNFPLALTKGDMANRIPLEYKGIQLKTNAEDIGTKGQMCSIAAVTWWNTYGPIGDTEGFEKVYESFFLRKMRLDNATWGRITFGPVERVRKRVLLNPLTKEMPPDEASNVIMEILFPKEAGIPRESTWIHRELIKEKREKLKGTMITPIVLAYMLERELVARRRFLPVAGATSAEFIEMLHCLQGENWRQIYHPGGNKLTESRSQSMIVACRKIIRRSIVASNPLELAVEIANKTVIDTEPLKSCLTAIDGGDVACDIIRAALGLKIRQRQRFGRLELKRISGRGFKNDEEILIGNGTIQKIGIWDGEEEFHVRCGECRGILKKSKMRMEKLLINSAKKEDMKDLIILCMVFSQDTRMFQGVRGEINFLNRAGQLLSPMYQLQRYFLNRSNDLFDQWGYEESPKASELHGINELMNASDYTLKGVVVTKNVIDDFSSTETEKVSITKNLSLIKRTGEVIMGANDVSELESQAQLMITYDTPKMWEMGTTKELVQNTYQWVLKNLVTLKAQFLLGKEDMFQWDAFEAFESIIPQKMAGQYSGFARAVLKQMRDQEVMKTDQFIKLLPFCFSPPKLRSNGEPYQFLRLVLKGGGENFIEVRKGSPLFSYNPQTEVLTICGRMMSLKGKIEDEERNRSMGNAVLAGFLVSGKYDPDLGDFKTIEELEKLKPGEKANILLYQGKPVKVVKRKRYSALSNDISQGIKRQRMTVESMGWALS.

Residues 740-743 carry the Nuclear localization signal motif; that stretch reads KRKR.

It belongs to the influenza viruses PB2 family. Influenza RNA polymerase is composed of three subunits: PB1, PB2 and PA. Interacts (via N-terminus) with PB1 (via C-terminus). Interacts with nucleoprotein NP (via N-terminus).

The protein resides in the virion. The protein localises to the host nucleus. Plays an essential role in transcription initiation and cap-stealing mechanism, in which cellular capped pre-mRNAs are used to generate primers for viral transcription. Recognizes and binds a wide range of cap structures of target pre-RNAs which are subsequently cleaved after 10-13 nucleotides by the viral protein PA. Plays a role in the initiation of the viral genome replication and modulates the activity of the ribonucleoprotein (RNP) complex. The protein is Polymerase basic protein 2 of Homo sapiens (Human).